The chain runs to 353 residues: MKGNVSELLNATQQAPGGGEGGRPRPSWLASTLAFILIFTIVVDILGNLLVILSVYRNKKLRNSGNIFVVSLAVADLVVAVYPYPLVLTSILNNGWNLGYLHCQVSAFLMGLSVIGSIFNITGIAMNRYCYICHSLKYDKIYSNKNSLCYVFLIWMLTLIAIMPNLQTGTLQYDPRIYSCTFTQSVSSAYTIAVVVFHFIVPMIIVIFCYLRIWVLVLQVRRRVKPDNKPKLKPQDFRNFVTMFVVFVLFAICWAPLNLIGLIVASDPATMVPRIPEWLFVASYYLAYFNSCLNAIIYGLLNQNFRKEYKKIIVSLCTAKMFFVESSNEEADKIKCKPSPLIPNNNLIKVDSV.

Over 1–32 (MKGNVSELLNATQQAPGGGEGGRPRPSWLAST) the chain is Extracellular. 2 N-linked (GlcNAc...) asparagine glycosylation sites follow: asparagine 4 and asparagine 10. Residues 33-53 (LAFILIFTIVVDILGNLLVIL) form a helical membrane-spanning segment. Residues 54–66 (SVYRNKKLRNSGN) are Cytoplasmic-facing. The chain crosses the membrane as a helical span at residues 67-87 (IFVVSLAVADLVVAVYPYPLV). The Extracellular segment spans residues 88–105 (LTSILNNGWNLGYLHCQV). Cysteines 103 and 180 form a disulfide. A helical transmembrane segment spans residues 106-126 (SAFLMGLSVIGSIFNITGIAM). The Cytoplasmic segment spans residues 127–145 (NRYCYICHSLKYDKIYSNK). The chain crosses the membrane as a helical span at residues 146-166 (NSLCYVFLIWMLTLIAIMPNL). Topologically, residues 167 to 190 (QTGTLQYDPRIYSCTFTQSVSSAY) are extracellular. The chain crosses the membrane as a helical span at residues 191–211 (TIAVVVFHFIVPMIIVIFCYL). Topologically, residues 212 to 243 (RIWVLVLQVRRRVKPDNKPKLKPQDFRNFVTM) are cytoplasmic. A helical membrane pass occupies residues 244-264 (FVVFVLFAICWAPLNLIGLIV). Over 265–277 (ASDPATMVPRIPE) the chain is Extracellular. Residues 278–298 (WLFVASYYLAYFNSCLNAIIY) form a helical membrane-spanning segment. Residues 299 to 353 (GLLNQNFRKEYKKIIVSLCTAKMFFVESSNEEADKIKCKPSPLIPNNNLIKVDSV) are Cytoplasmic-facing.

It belongs to the G-protein coupled receptor 1 family.

The protein localises to the cell membrane. Functionally, high affinity receptor for melatonin. Likely to mediate the reproductive and circadian actions of melatonin. The activity of this receptor is mediated by pertussis toxin sensitive G proteins that inhibit adenylate cyclase activity. Possibly involved in sleep induction, by melatonin activation of the potassium channel KCNMA1/BK and the dissociation of G-beta and G-gamma subunits, thereby decreasing synaptic transmission. The chain is Melatonin receptor type 1A (Mtnr1a) from Mus musculus (Mouse).